The primary structure comprises 316 residues: MVLILDNDLKPLYFTLAIISASFLVKRAYQSTNIYDFFNIKKKCNPFPQSQSELVDLLHYQKRMVLNKTIVETLKFVDRKLFLENKNVENPYYDEPKPIGYNATISAPHMHALMLDLLADRIPMSNGVALDIGSGSGYVTACLGHLMGCTGRVIGVEHIPELIERSIESIKRLDSTLLDRIQFLVGDGIKGWKQLKYDIIYLGAAIESLQVARELIDQLKNGGRIVMPVGKSNDFHELMVVDKNEDGIVSIKSLGVVRFVPLTSKENQLNPKNKPNATKVTNINGEKTLIRCEIIPAPDSNSNNNIKEFENLINKK.

S-adenosyl-L-homocysteine contacts are provided by residues 103-106, H111, S136, 157-158, 187-188, T263, and Q268; these read ATIS, EH, and DG. S106 is a catalytic residue.

This sequence belongs to the methyltransferase superfamily. L-isoaspartyl/D-aspartyl protein methyltransferase family.

The protein resides in the cytoplasm. The protein localises to the cytosol. It catalyses the reaction [protein]-L-isoaspartate + S-adenosyl-L-methionine = [protein]-L-isoaspartate alpha-methyl ester + S-adenosyl-L-homocysteine. Its function is as follows. Initiates the repair of damaged proteins by catalyzing methyl esterification of L-isoaspartyl and D-aspartyl residues produced by spontaneous isomerization and racemization of L-aspartyl and L-asparaginyl residues in aging peptides and proteins. The sequence is that of Probable protein-L-isoaspartate O-methyltransferase (pcmA) from Dictyostelium discoideum (Social amoeba).